Consider the following 379-residue polypeptide: Anhydro-N-acetylmuramic acid kinase (379 aa).

Residue 9–16 participates in ATP binding; that stretch reads GTSADGVD.

The protein belongs to the anhydro-N-acetylmuramic acid kinase family.

The enzyme catalyses 1,6-anhydro-N-acetyl-beta-muramate + ATP + H2O = N-acetyl-D-muramate 6-phosphate + ADP + H(+). It functions in the pathway amino-sugar metabolism; 1,6-anhydro-N-acetylmuramate degradation. Its pathway is cell wall biogenesis; peptidoglycan recycling. Its function is as follows. Catalyzes the specific phosphorylation of 1,6-anhydro-N-acetylmuramic acid (anhMurNAc) with the simultaneous cleavage of the 1,6-anhydro ring, generating MurNAc-6-P. Is required for the utilization of anhMurNAc either imported from the medium or derived from its own cell wall murein, and thus plays a role in cell wall recycling. This chain is Anhydro-N-acetylmuramic acid kinase, found in Prochlorococcus marinus (strain MIT 9303).